The following is a 297-amino-acid chain: SWIRM domain-containing protein laf1 (297 aa).

Disordered stretches follow at residues 50-70 (PKCS…KPTA) and 109-173 (STPA…EFSS). Residues 159 to 173 (QHNTRFKQSSREFSS) show a composition bias toward polar residues. The 91-residue stretch at 207–297 (LRSEWKGPPL…AFHDEGFFDD (91 aa)) folds into the SWIRM domain.

In terms of assembly, component of the RPD3C(L) complex.

It is found in the nucleus. Functionally, component of the RPD3C(L) histone deacetylase complex (HDAC) responsible for the deacetylation of lysine residues on the N-terminal part of the core histones (H2A, H2B, H3 and H4). Histone deacetylation gives a tag for epigenetic repression and plays an important role in transcriptional regulation, cell cycle progression and developmental events. This chain is SWIRM domain-containing protein laf1 (laf1), found in Schizosaccharomyces pombe (strain 972 / ATCC 24843) (Fission yeast).